Consider the following 299-residue polypeptide: Elongation factor Ts (299 aa).

Residues 82 to 85 form an involved in Mg(2+) ion dislocation from EF-Tu region; the sequence is TDFV.

Belongs to the EF-Ts family.

Its subcellular location is the cytoplasm. Associates with the EF-Tu.GDP complex and induces the exchange of GDP to GTP. It remains bound to the aminoacyl-tRNA.EF-Tu.GTP complex up to the GTP hydrolysis stage on the ribosome. This chain is Elongation factor Ts, found in Dechloromonas aromatica (strain RCB).